The following is a 415-amino-acid chain: Multidrug resistance protein MdtA (415 aa).

The first 21 residues, 1 to 21 (MKGSYKSRWVIVIVVVIAAIA), serve as a signal peptide directing secretion. A compositionally biased stretch (polar residues) spans 31-47 (DSQSAAPGATKQAQQSP). Disordered stretches follow at residues 31–60 (DSQS…GPLA) and 392–415 (EAQS…GARS). Basic and acidic residues predominate over residues 399–415 (PEEKATSREYAKKGARS).

It belongs to the membrane fusion protein (MFP) (TC 8.A.1) family. As to quaternary structure, part of a tripartite efflux system composed of MdtA, MdtB and MdtC.

It localises to the cell inner membrane. Its function is as follows. The MdtABC tripartite complex confers resistance against novobiocin and deoxycholate. This is Multidrug resistance protein MdtA from Escherichia coli O8 (strain IAI1).